A 692-amino-acid polypeptide reads, in one-letter code: DNA ligase (692 aa).

Residues aspartate 34–aspartate 38, serine 83–leucine 84, and glutamate 124 contribute to the NAD(+) site. The active-site N6-AMP-lysine intermediate is the lysine 126. Positions 147, 193, 310, and 334 each coordinate NAD(+). The Zn(2+) site is built by cysteine 428, cysteine 431, cysteine 446, and cysteine 452. One can recognise a BRCT domain in the interval alanine 612–alanine 692.

Belongs to the NAD-dependent DNA ligase family. LigA subfamily. Mg(2+) serves as cofactor. It depends on Mn(2+) as a cofactor.

It catalyses the reaction NAD(+) + (deoxyribonucleotide)n-3'-hydroxyl + 5'-phospho-(deoxyribonucleotide)m = (deoxyribonucleotide)n+m + AMP + beta-nicotinamide D-nucleotide.. DNA ligase that catalyzes the formation of phosphodiester linkages between 5'-phosphoryl and 3'-hydroxyl groups in double-stranded DNA using NAD as a coenzyme and as the energy source for the reaction. It is essential for DNA replication and repair of damaged DNA. This Laribacter hongkongensis (strain HLHK9) protein is DNA ligase.